Reading from the N-terminus, the 104-residue chain is MKFLKNKAPANLVDNGRFVEAITCNKVKPNPSCVSNCLKFLSEVLAVEAITDSARNLATVSKSDILLFSLLQLSSNKQSGSSLPLFDLVFILLSTFFLFHNPCN.

The chain crosses the membrane as a helical span at residues 80–98 (GSSLPLFDLVFILLSTFFL).

The protein localises to the membrane. This is an uncharacterized protein from Saccharomyces cerevisiae (strain ATCC 204508 / S288c) (Baker's yeast).